A 96-amino-acid polypeptide reads, in one-letter code: ATP synthase subunit c (96 aa).

The next 2 membrane-spanning stretches (helical) occupy residues 24–44 (HVGA…VGVG) and 75–95 (AIAE…IFVA).

It belongs to the ATPase C chain family. In terms of assembly, F-type ATPases have 2 components, F(1) - the catalytic core - and F(0) - the membrane proton channel. F(1) has five subunits: alpha(3), beta(3), gamma(1), delta(1), epsilon(1). F(0) has three main subunits: a(1), b(2) and c(10-14). The alpha and beta chains form an alternating ring which encloses part of the gamma chain. F(1) is attached to F(0) by a central stalk formed by the gamma and epsilon chains, while a peripheral stalk is formed by the delta and b chains.

It is found in the cell membrane. F(1)F(0) ATP synthase produces ATP from ADP in the presence of a proton or sodium gradient. F-type ATPases consist of two structural domains, F(1) containing the extramembraneous catalytic core and F(0) containing the membrane proton channel, linked together by a central stalk and a peripheral stalk. During catalysis, ATP synthesis in the catalytic domain of F(1) is coupled via a rotary mechanism of the central stalk subunits to proton translocation. Functionally, key component of the F(0) channel; it plays a direct role in translocation across the membrane. A homomeric c-ring of between 10-14 subunits forms the central stalk rotor element with the F(1) delta and epsilon subunits. This Mycoplasmoides gallisepticum (strain R(low / passage 15 / clone 2)) (Mycoplasma gallisepticum) protein is ATP synthase subunit c.